The chain runs to 452 residues: Cysteine--tRNA ligase (452 aa).

C35 provides a ligand contact to Zn(2+). The 'HIGH' region signature appears at 37-47 (PTVYDRAHLGN). Zn(2+)-binding residues include C215, H240, and E244. The 'KMSKS' region motif lies at 273–277 (KMSKS). K276 provides a ligand contact to ATP.

This sequence belongs to the class-I aminoacyl-tRNA synthetase family. Monomer. The cofactor is Zn(2+).

It is found in the cytoplasm. It carries out the reaction tRNA(Cys) + L-cysteine + ATP = L-cysteinyl-tRNA(Cys) + AMP + diphosphate. The polypeptide is Cysteine--tRNA ligase (Gluconobacter oxydans (strain 621H) (Gluconobacter suboxydans)).